Consider the following 316-residue polypeptide: Porphobilinogen deaminase (316 aa).

The residue at position 249 (Cys-249) is an S-(dipyrrolylmethanemethyl)cysteine.

This sequence belongs to the HMBS family. As to quaternary structure, monomer. The cofactor is dipyrromethane.

The enzyme catalyses 4 porphobilinogen + H2O = hydroxymethylbilane + 4 NH4(+). It participates in porphyrin-containing compound metabolism; protoporphyrin-IX biosynthesis; coproporphyrinogen-III from 5-aminolevulinate: step 2/4. Functionally, tetrapolymerization of the monopyrrole PBG into the hydroxymethylbilane pre-uroporphyrinogen in several discrete steps. The sequence is that of Porphobilinogen deaminase from Nitrobacter winogradskyi (strain ATCC 25391 / DSM 10237 / CIP 104748 / NCIMB 11846 / Nb-255).